Consider the following 221-residue polypeptide: Probable septum site-determining protein MinC (221 aa).

This sequence belongs to the MinC family. Interacts with MinD and FtsZ.

In terms of biological role, cell division inhibitor that blocks the formation of polar Z ring septums. Rapidly oscillates between the poles of the cell to destabilize FtsZ filaments that have formed before they mature into polar Z rings. Prevents FtsZ polymerization. The chain is Probable septum site-determining protein MinC from Aliivibrio salmonicida (strain LFI1238) (Vibrio salmonicida (strain LFI1238)).